A 312-amino-acid chain; its full sequence is Polyamine aminopropyltransferase (312 aa).

Positions 7-247 (FFWVQEYFTP…GPLGFALAAQ (241 aa)) constitute a PABS domain. S-methyl-5'-thioadenosine is bound at residue Gln-36. Residues His-67 and Glu-95 each contribute to the spermidine site. S-methyl-5'-thioadenosine is bound by residues Asp-115 and 147–148 (DA). Asp-165 serves as the catalytic Proton acceptor. Pro-174 is an S-methyl-5'-thioadenosine binding site.

Belongs to the spermidine/spermine synthase family. As to quaternary structure, homodimer or homotetramer.

It localises to the cytoplasm. The enzyme catalyses S-adenosyl 3-(methylsulfanyl)propylamine + putrescine = S-methyl-5'-thioadenosine + spermidine + H(+). Its pathway is amine and polyamine biosynthesis; spermidine biosynthesis; spermidine from putrescine: step 1/1. Its function is as follows. Catalyzes the irreversible transfer of a propylamine group from the amino donor S-adenosylmethioninamine (decarboxy-AdoMet) to putrescine (1,4-diaminobutane) to yield spermidine. This Synechococcus sp. (strain JA-2-3B'a(2-13)) (Cyanobacteria bacterium Yellowstone B-Prime) protein is Polyamine aminopropyltransferase.